A 271-amino-acid polypeptide reads, in one-letter code: Aliphatic sulfonates import ATP-binding protein SsuB (271 aa).

The ABC transporter domain occupies 13–234 (ITLESIGKRY…RKGSAKLAAL (222 aa)). Position 45–52 (45–52 (GRSGCGKS)) interacts with ATP. The disordered stretch occupies residues 250-271 (EASRQGIKASRQGTATSRRVAN). Polar residues predominate over residues 260–271 (RQGTATSRRVAN).

Belongs to the ABC transporter superfamily. Aliphatic sulfonates importer (TC 3.A.1.17.2) family. In terms of assembly, the complex is composed of two ATP-binding proteins (SsuB), two transmembrane proteins (SsuC) and a solute-binding protein (SsuA).

The protein localises to the cell inner membrane. The catalysed reaction is ATP + H2O + aliphatic sulfonate-[sulfonate-binding protein]Side 1 = ADP + phosphate + aliphatic sulfonateSide 2 + [sulfonate-binding protein]Side 1.. Part of the ABC transporter complex SsuABC involved in aliphatic sulfonates import. Responsible for energy coupling to the transport system. The polypeptide is Aliphatic sulfonates import ATP-binding protein SsuB (Yersinia pestis bv. Antiqua (strain Antiqua)).